Consider the following 498-residue polypeptide: Minor fimbrium subunit Mfa1 (498 aa).

The signal sequence occupies residues 1-19 (MKLNKMFLVGALLSLGFAS). A lipid anchor (N-palmitoyl cysteine) is attached at Cys20. A lipid anchor (S-diacylglycerol cysteine) is attached at Cys20. Residues 20–50 (CSKEGNGPAPDSSSTADTHMSVSMSLPQHNR) constitute a propeptide that is removed on maturation. Residues 436-476 (SGNPFVPTDPDPNNPDTPDNPDTPDPEDPDTPNPEEPLPVQ) are disordered.

This sequence belongs to the bacteroidetes fimbrillin superfamily. FimA/Mfa1 family. In terms of assembly, structural component of the fimbrial stalk. Minor fimbriae are composed of a structural subunit, such as the 53 kDa fimbrillin, and the accessory subunits Mfa3, Mfa4 and Mfa5. Fimbrium assembly occurs by linear, head-to-tail oligomerization of fimbrial subunits. This is mediated via insertion of a C-terminal beta-strand from one subunit into a groove in the N-terminal domain of the following subunit.

The protein localises to the fimbrium. The protein resides in the cell outer membrane. In terms of biological role, structural subunit of the minor fimbriae. These filamentous pili are attached to the cell surface; they mediate biofilm formation, adhesion onto host cells and onto other bacteria that are part of the oral microbiome. They play an important role in invasion of periodontal tissues and are recognized as major virulence factors. Mfa1 orthologs from different strains have highly divergent sequences, and this correlates with pathogenicity. This chain is Minor fimbrium subunit Mfa1, found in Porphyromonas gingivalis (Bacteroides gingivalis).